The primary structure comprises 596 residues: Beta-fructofuranosidase, insoluble isoenzyme 7 (596 aa).

Residues 1–24 (MARLGLAVCAASFHLFLLLASTSS) form the signal peptide. Residues 51 to 54 (WQND), Q70, and W78 contribute to the substrate site. The active site involves D54. A glycan (N-linked (GlcNAc...) asparagine) is linked at N82. Substrate-binding positions include 115 to 116 (WS), 179 to 180 (RD), and E234. N330 is a glycosylation site (N-linked (GlcNAc...) asparagine). A disulfide bridge links C432 with C478. N552 carries an N-linked (GlcNAc...) asparagine glycan.

It belongs to the glycosyl hydrolase 32 family.

The protein resides in the secreted. It is found in the extracellular space. It localises to the apoplast. Its subcellular location is the cell wall. It catalyses the reaction Hydrolysis of terminal non-reducing beta-D-fructofuranoside residues in beta-D-fructofuranosides.. In terms of biological role, may play a role in sucrose partitioning during seed development. The protein is Beta-fructofuranosidase, insoluble isoenzyme 7 (CIN7) of Oryza sativa subsp. indica (Rice).